The following is a 281-amino-acid chain: Glutamate racemase (281 aa).

Substrate contacts are provided by residues 13-14 and 45-46; these read DS and YG. Catalysis depends on Cys-76, which acts as the Proton donor/acceptor. 77–78 contributes to the substrate binding site; the sequence is NT. Residue Cys-185 is the Proton donor/acceptor of the active site. Substrate is bound at residue 186–187; that stretch reads TH.

The protein belongs to the aspartate/glutamate racemases family.

It carries out the reaction L-glutamate = D-glutamate. Its pathway is cell wall biogenesis; peptidoglycan biosynthesis. In terms of biological role, provides the (R)-glutamate required for cell wall biosynthesis. The sequence is that of Glutamate racemase from Rippkaea orientalis (strain PCC 8801 / RF-1) (Cyanothece sp. (strain PCC 8801)).